Reading from the N-terminus, the 200-residue chain is MAPTSKTSPPRLGKPLKRAFFGRSVREVAHDLIGATMLVDGVGGLIVEVEAYHHTEPAAHSYNGPTPRNHVMFGPPGFAYVYRSYGIHWCVNFVCEAEGSAAAVLIRALEPTHGIAAMRRRRHLQDVHALCSGPGKLTEALGITIAHNALPLDRPPIALHARTEDLEVATGIRIGITKAVELPWRYGVKGSKFLSKPFPK.

It belongs to the DNA glycosylase MPG family.

This Bradyrhizobium diazoefficiens (strain JCM 10833 / BCRC 13528 / IAM 13628 / NBRC 14792 / USDA 110) protein is Putative 3-methyladenine DNA glycosylase.